Consider the following 102-residue polypeptide: NADH-quinone oxidoreductase subunit K (102 aa).

The next 3 membrane-spanning stretches (helical) occupy residues 6-26, 30-50, and 63-83; these read LIGI…GVLA, MLFQ…GFIA, and MFIL…ALFL.

This sequence belongs to the complex I subunit 4L family. In terms of assembly, NDH-1 is composed of 14 different subunits. Subunits NuoA, H, J, K, L, M, N constitute the membrane sector of the complex.

It is found in the cell inner membrane. The catalysed reaction is a quinone + NADH + 5 H(+)(in) = a quinol + NAD(+) + 4 H(+)(out). In terms of biological role, NDH-1 shuttles electrons from NADH, via FMN and iron-sulfur (Fe-S) centers, to quinones in the respiratory chain. The immediate electron acceptor for the enzyme in this species is believed to be ubiquinone. Couples the redox reaction to proton translocation (for every two electrons transferred, four hydrogen ions are translocated across the cytoplasmic membrane), and thus conserves the redox energy in a proton gradient. In Rhodopseudomonas palustris (strain TIE-1), this protein is NADH-quinone oxidoreductase subunit K.